The chain runs to 339 residues: Anthranilate phosphoribosyltransferase (339 aa).

5-phospho-alpha-D-ribose 1-diphosphate-binding positions include Gly81, 84-85 (GD), Ser89, 91-94 (NVSS), 109-117 (KHGNRALSS), and Ala121. Gly81 provides a ligand contact to anthranilate. Ser93 contributes to the Mg(2+) binding site. Asn112 contacts anthranilate. Arg167 serves as a coordination point for anthranilate. Asp225 and Glu226 together coordinate Mg(2+).

It belongs to the anthranilate phosphoribosyltransferase family. Homodimer. Mg(2+) serves as cofactor.

It catalyses the reaction N-(5-phospho-beta-D-ribosyl)anthranilate + diphosphate = 5-phospho-alpha-D-ribose 1-diphosphate + anthranilate. The protein operates within amino-acid biosynthesis; L-tryptophan biosynthesis; L-tryptophan from chorismate: step 2/5. Its function is as follows. Catalyzes the transfer of the phosphoribosyl group of 5-phosphorylribose-1-pyrophosphate (PRPP) to anthranilate to yield N-(5'-phosphoribosyl)-anthranilate (PRA). The sequence is that of Anthranilate phosphoribosyltransferase from Brucella suis (strain ATCC 23445 / NCTC 10510).